Reading from the N-terminus, the 91-residue chain is ATP synthase subunit c (91 aa).

The next 2 membrane-spanning stretches (helical) occupy residues 4–24 (FTMCMLAAGFGMAIGAFGTGI) and 53–73 (IGLAMIESLAIYVLVVCLIIL).

The protein belongs to the ATPase C chain family. In terms of assembly, F-type ATPases have 2 components, F(1) - the catalytic core - and F(0) - the membrane proton channel. F(1) has five subunits: alpha(3), beta(3), gamma(1), delta(1), epsilon(1). F(0) has three main subunits: a(1), b(2) and c(10-14). The alpha and beta chains form an alternating ring which encloses part of the gamma chain. F(1) is attached to F(0) by a central stalk formed by the gamma and epsilon chains, while a peripheral stalk is formed by the delta and b chains.

The protein localises to the cell inner membrane. Its function is as follows. F(1)F(0) ATP synthase produces ATP from ADP in the presence of a proton or sodium gradient. F-type ATPases consist of two structural domains, F(1) containing the extramembraneous catalytic core and F(0) containing the membrane proton channel, linked together by a central stalk and a peripheral stalk. During catalysis, ATP synthesis in the catalytic domain of F(1) is coupled via a rotary mechanism of the central stalk subunits to proton translocation. Key component of the F(0) channel; it plays a direct role in translocation across the membrane. A homomeric c-ring of between 10-14 subunits forms the central stalk rotor element with the F(1) delta and epsilon subunits. The polypeptide is ATP synthase subunit c (Geobacter sulfurreducens (strain ATCC 51573 / DSM 12127 / PCA)).